We begin with the raw amino-acid sequence, 45 residues long: Turripeptide OL11-like (45 aa).

Cystine bridges form between Cys1–Cys31, Cys5–Cys24, and Cys13–Cys45. Positions 1–45 (CMTICTMEYWPVCGSDGKTYPNKCHLTSTACTSQKDITVLHEGKC) constitute a Kazal-like domain.

It belongs to the conopeptide P-like superfamily. In terms of tissue distribution, expressed by the venom duct.

It is found in the secreted. Acts as a neurotoxin by inhibiting an ion channel. May also act as a serine protease inhibitor, since it possess the kazal serine protease inhibitor signature. In Lophiotoma albina (Sea snail), this protein is Turripeptide OL11-like.